We begin with the raw amino-acid sequence, 132 residues long: Transcription antitermination protein NusB (132 aa).

Belongs to the NusB family.

In terms of biological role, involved in transcription antitermination. Required for transcription of ribosomal RNA (rRNA) genes. Binds specifically to the boxA antiterminator sequence of the ribosomal RNA (rrn) operons. This Lachnoclostridium phytofermentans (strain ATCC 700394 / DSM 18823 / ISDg) (Clostridium phytofermentans) protein is Transcription antitermination protein NusB.